A 340-amino-acid chain; its full sequence is MQQHALYHPVSIGPLSLKGNVFFAPVAGYSDSAFRSIAIEWEASFTYTEMVSSEAMVRDSLNTKRLIRRASNETHYAIQIFGSNPAVMAETAKLIVDSAQPSCIDINAGCPMPKITKTGAGAALTREPTRLYEVVKAVADAVYAQDARIPVTVKIRAGWEEAHLTWKEAARAAVDAGAQALALHPRTCAQCYAGEANWDIIADLVQCARGWGEVPVFGSGDLHAPEDARAMLEHTACAGVMFARGAMGNPFIFRQTRQLLTEGYYTPVTFEQKLRAAWRELHLLAQDVGESSACKQMRKRFVSYAKGERGKTQWCQRAVHASSFADFAAVIRDACPCIGL.

Residues 25–27 (PVA) and Gln79 each bind FMN. Cys110 (proton donor) is an active-site residue. FMN is bound by residues Lys154, 219-221 (SGD), and 243-244 (AR).

The protein belongs to the Dus family. FMN is required as a cofactor.

It catalyses the reaction a 5,6-dihydrouridine in tRNA + NAD(+) = a uridine in tRNA + NADH + H(+). The catalysed reaction is a 5,6-dihydrouridine in tRNA + NADP(+) = a uridine in tRNA + NADPH + H(+). Catalyzes the synthesis of 5,6-dihydrouridine (D), a modified base found in the D-loop of most tRNAs, via the reduction of the C5-C6 double bond in target uridines. The chain is Probable tRNA-dihydrouridine synthase (dus) from Treponema pallidum (strain Nichols).